A 396-amino-acid chain; its full sequence is MSHQPSIIRKTHPLLSLGNSMLVDLPSPANISAWWNFGSLLSLCLILQIITGLILAMHYTANTELAFSSVMHICRDVNNGWLMRNLHANGASMFFICIYAHIGRGIYYGSYLYKETWNVGVILFALTAATAFVGYVLPWGQMSFWGATVITNLISAMPYVGNDIVVWLWGGFSVSNATLTRFFTFHFILPFILAAMTMIHIMFLHQTGSSNPMGINSNLDKIQFHPYFSFKDILGFVILLGILFMISLLAPNALGEPDNFIYANPLSTPPHIKPEWYFLFAYAILRSVPNKLGGVVALAAAIMILLIIPFTHTSKQRGMQFRPLAQITFWILIADLALLTWLGGEPAEYPFILMTQIASTVYFMIFILVFPILGYLENKMLLMSKNTGKFNWKLVY.

A run of 4 helical transmembrane segments spans residues 37 to 57 (FGSL…ILAM), 81 to 102 (WLMR…YAHI), 117 to 137 (WNVG…GYVL), and 182 to 202 (FFTF…IHIM). The heme b site is built by His-87 and His-101. Heme b is bound by residues His-186 and His-200. A ubiquinone is bound at residue His-205. Helical transmembrane passes span 230–250 (FKDI…SLLA), 292–312 (LGGV…PFTH), 324–344 (LAQI…WLGG), and 351–371 (FILM…LVFP).

The protein belongs to the cytochrome b family. In terms of assembly, the cytochrome bc1 complex contains 3 respiratory subunits (MT-CYB, CYC1 and UQCRFS1), 2 core proteins (UQCRC1 and UQCRC2) and probably 6 low-molecular weight proteins. The cofactor is heme b.

The protein resides in the mitochondrion inner membrane. In terms of biological role, component of the ubiquinol-cytochrome c reductase complex (complex III or cytochrome b-c1 complex) that is part of the mitochondrial respiratory chain. The b-c1 complex mediates electron transfer from ubiquinol to cytochrome c. Contributes to the generation of a proton gradient across the mitochondrial membrane that is then used for ATP synthesis. In Petromyzon marinus (Sea lamprey), this protein is Cytochrome b (mt-cyb).